A 359-amino-acid chain; its full sequence is Ribosomal RNA small subunit methyltransferase H (359 aa).

S-adenosyl-L-methionine contacts are provided by residues 39–41 (AGH), D58, F87, D108, and Q115. The segment at 339-359 (IQGSASPGRAKNTARIRTRRG) is disordered. The span at 350-359 (NTARIRTRRG) shows a compositional bias: basic residues.

This sequence belongs to the methyltransferase superfamily. RsmH family.

The protein resides in the cytoplasm. It carries out the reaction cytidine(1402) in 16S rRNA + S-adenosyl-L-methionine = N(4)-methylcytidine(1402) in 16S rRNA + S-adenosyl-L-homocysteine + H(+). Functionally, specifically methylates the N4 position of cytidine in position 1402 (C1402) of 16S rRNA. This Bifidobacterium longum subsp. infantis (strain ATCC 15697 / DSM 20088 / JCM 1222 / NCTC 11817 / S12) protein is Ribosomal RNA small subunit methyltransferase H.